A 499-amino-acid chain; its full sequence is MEILSLLSYSVFYLALFFIFNIVIRARKFKNLPPGPPSLPIIGNLHHLKRPLHRTFKGLSEKYGHVFSLWFGSRLVVVVSSASEFQQCFTKNDVVLANRPRFLSGKYIFYNYTTLGSTSYGEHWRNLRRITALDVLSNHRINSFSGIRRDETQRLITRLADDSSTNFAEMELSSRLYDMTFNNIMRMISGKRYYGEDCDTSDLQEASQFRDMVSELLQLSGANNKTDFMPLLRFLDFENLEKRLKDISGKTDAFLRGLIEEHRTKKERANTMIDHLLNLQDSQPEYYTDQIIKGLALAMLLAGTDSSAVTLEWSMSNLLNHPEVLKKVKDELDTHVGQDRLVDESDLPKLTYLKNVINETLRLYTPAPLLLPHSTSDECNIGGYKVPQDTIVLINAWAIHRDPELWTEATTFKPERFEKKGELEKLIAFGMGRRACPGEGLAIRAISMTLALLIQCFDWKLINGDKIDLAERDGFTLTKLVPLKAMCKSRPVINKVFKQ.

Residue C436 coordinates heme.

The protein belongs to the cytochrome P450 family. The cofactor is heme.

It localises to the membrane. It carries out the reaction a 2'-unsubstituted isoflavone + reduced [NADPH--hemoprotein reductase] + O2 = a 2'-hydroxyisoflavone + oxidized [NADPH--hemoprotein reductase] + H2O + H(+). Its function is as follows. Catalyzes the hydroxylation of isoflavones, daidzein and formononetin, to yield 2'-hydroxyisoflavones, 2'-hydroxydaidzein, and 2'-hydroxyformononetin, respectively. This chain is Isoflavone 2'-hydroxylase (CYP81E1), found in Glycyrrhiza echinata (Licorice).